A 136-amino-acid chain; its full sequence is Histone H3.3 (136 aa).

Residues 1-42 (MARTKQTARKSTGGKAPRKQLASKAARKSAPVSGGVKKPHRY) form a disordered region. Residue lysine 5 is modified to N6,N6,N6-trimethyllysine; alternate. Lysine 5 bears the N6,N6-dimethyllysine; alternate mark. 2 positions are modified to N6-methyllysine; alternate: lysine 5 and lysine 10. Residue lysine 10 is modified to N6-acetyllysine; alternate. A Phosphoserine modification is found at serine 11. The residue at position 15 (lysine 15) is an N6,N6-dimethyllysine; alternate. 5 positions are modified to N6-acetyllysine; alternate: lysine 15, lysine 19, lysine 24, lysine 28, and lysine 37. N6-methyllysine; alternate is present on residues lysine 19, lysine 24, lysine 28, and lysine 37. N6,N6,N6-trimethyllysine; alternate occurs at positions 28 and 37. Lysine 28 and lysine 37 each carry N6,N6-dimethyllysine; alternate. An N6-acetyllysine mark is found at lysine 57 and lysine 65. Lysine 80 carries the post-translational modification N6,N6,N6-trimethyllysine; alternate. Lysine 80 carries the post-translational modification N6,N6-dimethyllysine; alternate. An N6-methyllysine; alternate modification is found at lysine 80.

The protein belongs to the histone H3 family. In terms of assembly, the nucleosome is a histone octamer containing two molecules each of H2A, H2B, H3 and H4 assembled in one H3-H4 heterotetramer and two H2A-H2B heterodimers. The octamer wraps approximately 147 bp of DNA. Post-translationally, phosphorylated by IPL1 to form H3S10ph. H3S10ph promotes subsequent H3K14ac formation and is required for transcriptional activation through TBP recruitment to the promoters. In terms of processing, mono-, di- and trimethylated by the COMPASS complex to form H3K4me1/2/3. H3K4me activates gene expression by regulating transcription elongation and plays a role in telomere length maintenance. H3K4me enrichment correlates with transcription levels, and occurs in a 5' to 3' gradient with H3K4me3 enrichment at the 5'-end of genes, shifting to H3K4me2 and then H3K4me1. Methylated by SET2 to form H3K36me. H3K36me represses gene expression. Methylated by DOT1 to form H3K79me. H3K79me is required for association of SIR proteins with telomeric regions and for telomeric silencing. The COMPASS-mediated formation of H3K4me2/3 and the DOT1-mediated formation of H3K79me require H2BK123ub1. Acetylation of histone H3 leads to transcriptional activation. H3K14ac formation by GCN5 is promoted by H3S10ph. H3K14ac can also be formed by ESA1. H3K56ac formation occurs predominantly in newly synthesized H3 molecules during G1, S and G2/M of the cell cycle and may be involved in DNA repair.

The protein localises to the nucleus. The protein resides in the chromosome. Its function is as follows. Core component of nucleosome. Nucleosomes wrap and compact DNA into chromatin, limiting DNA accessibility to the cellular machineries which require DNA as a template. Histones thereby play a central role in transcription regulation, DNA repair, DNA replication and chromosomal stability. DNA accessibility is regulated via a complex set of post-translational modifications of histones, also called histone code, and nucleosome remodeling. The protein is Histone H3.3 (HHT3) of Candida albicans (strain SC5314 / ATCC MYA-2876) (Yeast).